The primary structure comprises 359 residues: DNA-directed RNA polymerase RPB3-11 homolog (359 aa).

The protein in the N-terminal section; belongs to the archaeal RpoD/eukaryotic RPB3 RNA polymerase subunit family. In the C-terminal section; belongs to the archaeal RpoL/eukaryotic RPB11/RPC19 RNA polymerase subunit family. As to quaternary structure, part of the viral DNA-directed RNA polymerase that consists of 8 polII-like subunits (RPB1, RPB2, RPB3, RPB5, RPB6, RPB7, RPB9, RPB10), a capping enzyme and a termination factor.

It localises to the host cytoplasm. It is found in the virion. Component of the DNA-directed RNA polymerase (RNAP) that catalyzes the transcription in the cytoplasm of viral DNA into RNA using the four ribonucleoside triphosphates as substrates. The protein is DNA-directed RNA polymerase RPB3-11 homolog of Ornithodoros (relapsing fever ticks).